The chain runs to 429 residues: Adenylosuccinate synthetase (429 aa).

Residues 12 to 18 (GDEGKGK) and 40 to 42 (GHT) contribute to the GTP site. D13 functions as the Proton acceptor in the catalytic mechanism. Residues D13 and G40 each contribute to the Mg(2+) site. Residues 13 to 16 (DEGK), 38 to 41 (NAGH), T129, R143, Q224, T239, and R303 each bind IMP. H41 acts as the Proton donor in catalysis. 299-305 (VTTGRAR) serves as a coordination point for substrate. GTP-binding positions include R305, 331–333 (KLD), and 413–415 (GVG).

Belongs to the adenylosuccinate synthetase family. In terms of assembly, homodimer. The cofactor is Mg(2+).

The protein resides in the cytoplasm. The catalysed reaction is IMP + L-aspartate + GTP = N(6)-(1,2-dicarboxyethyl)-AMP + GDP + phosphate + 2 H(+). Its pathway is purine metabolism; AMP biosynthesis via de novo pathway; AMP from IMP: step 1/2. Plays an important role in the de novo pathway of purine nucleotide biosynthesis. Catalyzes the first committed step in the biosynthesis of AMP from IMP. The protein is Adenylosuccinate synthetase of Rhodococcus jostii (strain RHA1).